A 229-amino-acid polypeptide reads, in one-letter code: UPF0758 protein GSU0386 (229 aa).

One can recognise an MPN domain in the interval 107–229 (RFTSPEQVYN…FTSFVSAGLL (123 aa)). 3 residues coordinate Zn(2+): His-178, His-180, and Asp-191. The JAMM motif motif lies at 178–191 (HNHPTGDPAPSRED).

This sequence belongs to the UPF0758 family.

This chain is UPF0758 protein GSU0386, found in Geobacter sulfurreducens (strain ATCC 51573 / DSM 12127 / PCA).